The chain runs to 146 residues: Hut operon positive regulatory protein (146 aa).

It belongs to the HutP family. In terms of assembly, homohexamer.

Functionally, antiterminator that binds to cis-acting regulatory sequences on the mRNA in the presence of histidine, thereby suppressing transcription termination and activating the hut operon for histidine utilization. The protein is Hut operon positive regulatory protein of Bacillus anthracis (strain CDC 684 / NRRL 3495).